A 488-amino-acid chain; its full sequence is Probable cytochrome P450 6u1 (488 aa).

C430 provides a ligand contact to heme.

This sequence belongs to the cytochrome P450 family. Requires heme as cofactor.

The protein resides in the endoplasmic reticulum membrane. The protein localises to the microsome membrane. May be involved in the metabolism of insect hormones and in the breakdown of synthetic insecticides. The sequence is that of Probable cytochrome P450 6u1 (Cyp6u1) from Drosophila melanogaster (Fruit fly).